The primary structure comprises 285 residues: Glutamate racemase (285 aa).

Substrate-binding positions include 28–29 and 60–61; these read DS and YG. The active-site Proton donor/acceptor is the Cys92. 93-94 is a substrate binding site; that stretch reads NT. The Proton donor/acceptor role is filled by Cys204. Residue 205 to 206 coordinates substrate; sequence TH.

It belongs to the aspartate/glutamate racemases family.

It carries out the reaction L-glutamate = D-glutamate. Its pathway is cell wall biogenesis; peptidoglycan biosynthesis. Provides the (R)-glutamate required for cell wall biosynthesis. This is Glutamate racemase from Escherichia coli (strain UTI89 / UPEC).